We begin with the raw amino-acid sequence, 118 residues long: Putative pterin-4-alpha-carbinolamine dehydratase (118 aa).

It belongs to the pterin-4-alpha-carbinolamine dehydratase family.

It catalyses the reaction (4aS,6R)-4a-hydroxy-L-erythro-5,6,7,8-tetrahydrobiopterin = (6R)-L-erythro-6,7-dihydrobiopterin + H2O. This chain is Putative pterin-4-alpha-carbinolamine dehydratase, found in Xanthomonas oryzae pv. oryzae (strain MAFF 311018).